Consider the following 213-residue polypeptide: Pyrrolidone-carboxylate peptidase (213 aa).

Residues Glu81, Cys144, and His166 contribute to the active site.

It belongs to the peptidase C15 family. Homotetramer.

The protein localises to the cytoplasm. The enzyme catalyses Release of an N-terminal pyroglutamyl group from a polypeptide, the second amino acid generally not being Pro.. Its function is as follows. Removes 5-oxoproline from various penultimate amino acid residues except L-proline. The chain is Pyrrolidone-carboxylate peptidase from Pseudomonas fluorescens (strain SBW25).